Consider the following 414-residue polypeptide: Histidine--tRNA ligase (414 aa).

Belongs to the class-II aminoacyl-tRNA synthetase family. Homodimer.

It is found in the cytoplasm. The enzyme catalyses tRNA(His) + L-histidine + ATP = L-histidyl-tRNA(His) + AMP + diphosphate + H(+). The sequence is that of Histidine--tRNA ligase from Synechococcus sp. (strain RCC307).